Reading from the N-terminus, the 227-residue chain is UPF0173 metal-dependent hydrolase SSO0099 (227 aa).

It belongs to the UPF0173 family.

This Saccharolobus solfataricus (strain ATCC 35092 / DSM 1617 / JCM 11322 / P2) (Sulfolobus solfataricus) protein is UPF0173 metal-dependent hydrolase SSO0099.